We begin with the raw amino-acid sequence, 123 residues long: MADLAKLVDELSALTVLEAAELSKLLEEKWGVSAAAPVAVAAVAAEAAAPVEEKTEFDVILVDAGDKKINVIKEVRAITNLGLKEAKDLVEGAPKPVKEAVSKDEAASIKKKLEEAGAKVELK.

The protein belongs to the bacterial ribosomal protein bL12 family. Homodimer. Part of the ribosomal stalk of the 50S ribosomal subunit. Forms a multimeric L10(L12)X complex, where L10 forms an elongated spine to which 2 to 4 L12 dimers bind in a sequential fashion. Binds GTP-bound translation factors.

In terms of biological role, forms part of the ribosomal stalk which helps the ribosome interact with GTP-bound translation factors. Is thus essential for accurate translation. In Rhodospirillum rubrum (strain ATCC 11170 / ATH 1.1.1 / DSM 467 / LMG 4362 / NCIMB 8255 / S1), this protein is Large ribosomal subunit protein bL12.